Consider the following 512-residue polypeptide: Retinaldehyde dehydrogenase 3 (512 aa).

Residues 1-23 form a disordered region; the sequence is MATANGAVENGQPDGKPPALPRP. The residue at position 2 (A2) is an N-acetylalanine. Residues K204, E207, and 257–262 each bind NAD(+); that span reads GSTEVG. The active-site Proton acceptor is E280. C314 functions as the Nucleophile in the catalytic mechanism. Residues Q361 and E411 each coordinate NAD(+).

It belongs to the aldehyde dehydrogenase family. In terms of assembly, homotetramer.

Its subcellular location is the cytoplasm. It carries out the reaction all-trans-retinal + NAD(+) + H2O = all-trans-retinoate + NADH + 2 H(+). The enzyme catalyses retinal + NAD(+) + H2O = retinoate + NADH + 2 H(+). The catalysed reaction is all-trans-13,14-dihydroretinal + NAD(+) + H2O = all-trans-13,14-dihydroretinoate + NADH + 2 H(+). Its pathway is cofactor metabolism; retinol metabolism. Catalyzes the NAD-dependent oxidation of aldehyde substrates, such as all-trans-retinal and all-trans-13,14-dihydroretinal, to their corresponding carboxylic acids, all-trans-retinoate and all-trans-13,14-dihydroretinoate, respectively. High specificity for all-trans-retinal as substrate, can also accept acetaldehyde as substrate in vitro but with lower affinity. Required for the biosynthesis of normal levels of retinoate in the embryonic ocular and nasal regions; a critical lipid in the embryonic development of the eye and the nasal region. The chain is Retinaldehyde dehydrogenase 3 (Aldh1a3) from Rattus norvegicus (Rat).